We begin with the raw amino-acid sequence, 2255 residues long: Non-reducing polyketide synthase nvfA (2255 aa).

Positions Ile-13–Glu-251 are N-terminal acylcarrier protein transacylase domain (SAT). A Ketosynthase family 3 (KS3) domain is found at Val-365–Gln-781. Residues Cys-530, His-665, and His-704 each act as for beta-ketoacyl synthase activity in the active site. The malonyl-CoA:ACP transacylase (MAT) domain stretch occupies residues Leu-887–Ala-1187. The For acyl/malonyl transferase activity role is filled by Ser-974. An N-terminal hotdog fold region spans residues Glu-1229–Ser-1357. One can recognise a PKS/mFAS DH domain in the interval Glu-1229–Thr-1536. The product template (PT) domain stretch occupies residues Gly-1232–Leu-1535. His-1262 functions as the Proton acceptor; for dehydratase activity in the catalytic mechanism. A C-terminal hotdog fold region spans residues Ser-1385–Thr-1536. The active-site Proton donor; for dehydratase activity is the Asp-1443. The region spanning Thr-1581 to Ala-1655 is the Carrier domain. The residue at position 1615 (Ser-1615) is an O-(pantetheine 4'-phosphoryl)serine. The tract at residues His-1809 to Asn-2042 is methyltransferase (CMeT) domain. The thioesterase (TE) domain stretch occupies residues Leu-2109–Tyr-2227. Residue Ser-2194 is the For thioesterase activity of the active site.

The catalysed reaction is 3 malonyl-CoA + acetyl-CoA + 2 S-adenosyl-L-methionine = 3,5-dimethylorsellinate + 2 S-adenosyl-L-homocysteine + 3 CO2 + 4 CoA. Its pathway is secondary metabolite biosynthesis; terpenoid biosynthesis. Functionally, non-reducing polyketide synthase; part of the gene cluster that mediates the biosynthesis of novofumigatonin, a heavily oxygenated meroterpenoid containing a unique orthoester moiety. The first step of the pathway is the synthesis of 3,5-dimethylorsellinic acid (DMOA) by the polyketide synthase nvfA via condensation of one acetyl-CoA starter unit with 3 malonyl-CoA units and 2 methylations. DMOA is then converted to farnesyl-DMOA by the farnesyltransferase nvfB. Epoxydation by FAD-dependent monooxygenase nvfK, followed by a protonation-initiated cyclization catalyzed by the terpene cyclase nvfL leads to the production of asnavolin H. The short chain dehydrogenase nvfC then as a 3-OH dehydrogenase of asnovolin H to yield chemesin D. There are two branches to synthesize asnovolin A from chemesin D. In one branch, chemesin D undergoes Baeyer-Villiger oxidation by nvfH, methylation by nvfJ, and enoyl reduction by the nvfM D enoylreductase that reduces the double bond between C-5'and C-6', to form respectively asnovolin I, asnovolin K, and asnovolin A. In the other branch, the methylation precedes the Baeyer-Villiger oxidation and the enoyl reduction to yield asnovolin A via the asnovolin J intermediate. Asnovolin A is further converted to fumigatonoid A by the Fe(II)/2-oxoglutarate-dependent dioxygenase nvfI that catalyzes an endoperoxidation reaction. The alpha/beta hydrolase nvfD then acts as an epimerase that converts fumigatonoid A to its C-5' epimer, which then undergoes spontaneous or nvfD-catalyzed lactonization. The following step utilizes the ketoreductase nvfG to produce fumigatonoid B. The dioxygenase nvfE further converts fumigatonoid B into fumigatonoid C. Finally the Fe(II)/2-oxoglutarate-dependent dioxygenase nvfF catalyzes two rounds of oxidation to transform fumigatonoid C into the end product, novofumigatonin A. The protein is Non-reducing polyketide synthase nvfA of Aspergillus novofumigatus (strain IBT 16806).